A 246-amino-acid chain; its full sequence is Proteasome subunit alpha type-6-B (246 aa).

Belongs to the peptidase T1A family. Component of the 20S core complex of the 26S proteasome. The 26S proteasome is composed of a core protease (CP), known as the 20S proteasome, capped at one or both ends by the 19S regulatory particle (RP/PA700). The 20S proteasome core is composed of 28 subunits that are arranged in four stacked rings, resulting in a barrel-shaped structure. The two end rings are each formed by seven alpha subunits, and the two central rings are each formed by seven beta subunits. The catalytic chamber with the active sites is on the inside of the barrel.

Its subcellular location is the cytoplasm. The protein localises to the nucleus. In terms of biological role, the proteasome is a multicatalytic proteinase complex which is characterized by its ability to cleave peptides with Arg, Phe, Tyr, Leu, and Glu adjacent to the leaving group at neutral or slightly basic pH. The proteasome has an ATP-dependent proteolytic activity. The protein is Proteasome subunit alpha type-6-B (PAA2) of Arabidopsis thaliana (Mouse-ear cress).